Here is a 337-residue protein sequence, read N- to C-terminus: ATP-dependent 6-phosphofructokinase (337 aa).

Glycine 11 provides a ligand contact to ATP. ADP is bound at residue arginine 21–arginine 25. ATP is bound by residues arginine 72–tyrosine 73 and glycine 102–serine 105. Aspartate 103 lines the Mg(2+) pocket. A substrate-binding site is contributed by threonine 125–aspartate 127. Residue aspartate 127 is the Proton acceptor of the active site. Residue arginine 154 participates in ADP binding. Residues arginine 162 and methionine 169–arginine 171 contribute to the substrate site. Residues glycine 185–aspartate 187, arginine 212, and lysine 214–histidine 216 contribute to the ADP site. Substrate-binding positions include glutamate 223, arginine 245, and histidine 251–arginine 254.

This sequence belongs to the phosphofructokinase type A (PFKA) family. ATP-dependent PFK group I subfamily. Prokaryotic clade 'B1' sub-subfamily. Homotetramer. Requires Mg(2+) as cofactor.

The protein localises to the cytoplasm. It catalyses the reaction beta-D-fructose 6-phosphate + ATP = beta-D-fructose 1,6-bisphosphate + ADP + H(+). Its pathway is carbohydrate degradation; glycolysis; D-glyceraldehyde 3-phosphate and glycerone phosphate from D-glucose: step 3/4. Its activity is regulated as follows. Allosterically activated by ADP and other diphosphonucleosides, and allosterically inhibited by phosphoenolpyruvate. In terms of biological role, catalyzes the phosphorylation of D-fructose 6-phosphate to fructose 1,6-bisphosphate by ATP, the first committing step of glycolysis. The sequence is that of ATP-dependent 6-phosphofructokinase from Streptococcus equi subsp. zooepidemicus (strain H70).